A 130-amino-acid chain; its full sequence is Small ribosomal subunit protein uS11 (130 aa).

Residues 108–130 (IEDVTPIPHDGTGRPGGKRGRRV) are disordered.

The protein belongs to the universal ribosomal protein uS11 family. As to quaternary structure, part of the 30S ribosomal subunit.

Located on the platform of the 30S subunit. The sequence is that of Small ribosomal subunit protein uS11 from Methanothermobacter thermautotrophicus (strain ATCC 29096 / DSM 1053 / JCM 10044 / NBRC 100330 / Delta H) (Methanobacterium thermoautotrophicum).